The primary structure comprises 317 residues: Methionyl-tRNA formyltransferase (317 aa).

(6S)-5,6,7,8-tetrahydrofolate is bound at residue 117-120 (SLLP).

It belongs to the Fmt family.

It carries out the reaction L-methionyl-tRNA(fMet) + (6R)-10-formyltetrahydrofolate = N-formyl-L-methionyl-tRNA(fMet) + (6S)-5,6,7,8-tetrahydrofolate + H(+). Its function is as follows. Attaches a formyl group to the free amino group of methionyl-tRNA(fMet). The formyl group appears to play a dual role in the initiator identity of N-formylmethionyl-tRNA by promoting its recognition by IF2 and preventing the misappropriation of this tRNA by the elongation apparatus. The polypeptide is Methionyl-tRNA formyltransferase (Herminiimonas arsenicoxydans).